We begin with the raw amino-acid sequence, 129 residues long: UPF0325 protein HCH_00487 (129 aa).

This sequence belongs to the UPF0325 family.

In Hahella chejuensis (strain KCTC 2396), this protein is UPF0325 protein HCH_00487.